The chain runs to 461 residues: Mycosin-3 (461 aa).

The signal sequence occupies residues Met1–Ala25. In terms of domain architecture, Peptidase S8 spans Asp64–Leu397. Catalysis depends on charge relay system residues Asp95, His126, and Ser342. Residues Ala432–Ile452 form a helical membrane-spanning segment.

This sequence belongs to the peptidase S8 family.

It is found in the cell membrane. This Mycobacterium tuberculosis (strain ATCC 25618 / H37Rv) protein is Mycosin-3.